Consider the following 335-residue polypeptide: tRNA N6-adenosine threonylcarbamoyltransferase (335 aa).

Residues His107 and His111 each coordinate Fe cation. Substrate contacts are provided by residues 129-133 (LVSGG), Asp162, Gly175, and Asn268. Asp296 provides a ligand contact to Fe cation.

It belongs to the KAE1 / TsaD family. Requires Fe(2+) as cofactor.

It localises to the cytoplasm. It catalyses the reaction L-threonylcarbamoyladenylate + adenosine(37) in tRNA = N(6)-L-threonylcarbamoyladenosine(37) in tRNA + AMP + H(+). Its function is as follows. Required for the formation of a threonylcarbamoyl group on adenosine at position 37 (t(6)A37) in tRNAs that read codons beginning with adenine. Is involved in the transfer of the threonylcarbamoyl moiety of threonylcarbamoyl-AMP (TC-AMP) to the N6 group of A37, together with TsaE and TsaB. TsaD likely plays a direct catalytic role in this reaction. This chain is tRNA N6-adenosine threonylcarbamoyltransferase, found in Campylobacter fetus subsp. fetus (strain 82-40).